The following is a 413-amino-acid chain: Protein cycle (413 aa).

The disordered stretch occupies residues M1–R43. Positions E8–D19 are enriched in acidic residues. A compositionally biased stretch (basic and acidic residues) spans E20–R41. Residues N30–I83 form the bHLH domain. Residues D104–P175 form the PAS 1 domain. Residues N219–T242 are disordered. One can recognise a PAS 2 domain in the interval P297–P367. Positions T372–L413 constitute a PAC domain.

As to quaternary structure, efficient DNA binding requires dimerization with another bHLH protein. Forms a heterodimer with Clock in order to activate PER and TIM transcription. As to expression, expressed in head and ovary.

It is found in the nucleus. Putative transcription factor involved in the generation of biological rhythms. Activates cycling transcription of Period (PER) and Timeless (TIM) by binding to the E-box (5'-CACGTG-3') present in their promoters. The sequence is that of Protein cycle (cyc) from Drosophila melanogaster (Fruit fly).